A 252-amino-acid chain; its full sequence is uncharacterized protein (252 aa).

The N-terminal stretch at 1 to 25 is a signal peptide; it reads MRKKKFLSRFAFGSLFLLCGTILSA. A lipid anchor (N-palmitoyl cysteine) is attached at Cys-26. Residue Cys-26 is the site of S-diacylglycerol cysteine attachment.

This sequence belongs to the MG439/MG440 family.

It is found in the cell membrane. This is an uncharacterized protein from Mycoplasma pneumoniae (strain ATCC 29342 / M129 / Subtype 1) (Mycoplasmoides pneumoniae).